Here is a 62-residue protein sequence, read N- to C-terminus: Large ribosomal subunit protein bL28 (62 aa).

It belongs to the bacterial ribosomal protein bL28 family.

The chain is Large ribosomal subunit protein bL28 from Frankia casuarinae (strain DSM 45818 / CECT 9043 / HFP020203 / CcI3).